A 203-amino-acid chain; its full sequence is Holliday junction branch migration complex subunit RuvA (203 aa).

The interval 1–63 is domain I; the sequence is MIGKLSGKID…EEHIHLYGFL (63 aa). Residues 64-142 form a domain II region; sequence TLEEKNFFNL…KISSGSVIIK (79 aa). The segment at 143–149 is flexible linker; that stretch reads DSLNIKN. The domain III stretch occupies residues 150 to 203; the sequence is ITPVASNEVIKALVNLGFSRFEAQNAVQGIIIQNPEISIDELIKTALKNRNAGL.

This sequence belongs to the RuvA family. Homotetramer. Forms an RuvA(8)-RuvB(12)-Holliday junction (HJ) complex. HJ DNA is sandwiched between 2 RuvA tetramers; dsDNA enters through RuvA and exits via RuvB. An RuvB hexamer assembles on each DNA strand where it exits the tetramer. Each RuvB hexamer is contacted by two RuvA subunits (via domain III) on 2 adjacent RuvB subunits; this complex drives branch migration. In the full resolvosome a probable DNA-RuvA(4)-RuvB(12)-RuvC(2) complex forms which resolves the HJ.

It is found in the cytoplasm. Its function is as follows. The RuvA-RuvB-RuvC complex processes Holliday junction (HJ) DNA during genetic recombination and DNA repair, while the RuvA-RuvB complex plays an important role in the rescue of blocked DNA replication forks via replication fork reversal (RFR). RuvA specifically binds to HJ cruciform DNA, conferring on it an open structure. The RuvB hexamer acts as an ATP-dependent pump, pulling dsDNA into and through the RuvAB complex. HJ branch migration allows RuvC to scan DNA until it finds its consensus sequence, where it cleaves and resolves the cruciform DNA. This Rickettsia felis (strain ATCC VR-1525 / URRWXCal2) (Rickettsia azadi) protein is Holliday junction branch migration complex subunit RuvA.